A 156-amino-acid polypeptide reads, in one-letter code: Persephin (156 aa).

Positions 1-21 (MAVGKFLLGSLLLLSLQLGQG) are cleaved as a signal peptide. 3 disulfide bridges follow: Cys-66–Cys-124, Cys-93–Cys-152, and Cys-97–Cys-154.

Belongs to the TGF-beta family. GDNF subfamily. In terms of assembly, homodimer; disulfide-linked. Interacts with GFRA4 coreceptor and RET: forms a 2:2:2 ternary complex composed of PSPN ligand, GFRA4 and RET receptor.

Its subcellular location is the secreted. Its function is as follows. Growth factor that exhibits neurotrophic activity on mesencephalic dopaminergic and motor neurons. Acts by binding to its coreceptor, GFRA4, leading to autophosphorylation and activation of the RET receptor. This is Persephin from Homo sapiens (Human).